A 1196-amino-acid polypeptide reads, in one-letter code: Homeodomain-interacting protein kinase 2 (1196 aa).

At serine 16 the chain carries Phosphoserine. A Glycyl lysine isopeptide (Lys-Gly) (interchain with G-Cter in SUMO); alternate cross-link involves residue lysine 32. Residue lysine 32 forms a Glycyl lysine isopeptide (Lys-Gly) (interchain with G-Cter in SUMO2); alternate linkage. Positions 50-69 (VYSQSKNIPPSQPASTTVST) are disordered. The segment at 97–230 (SASSTSVTGQ…TNEIVAIKIL (134 aa)) is transcriptional corepression. Phosphoserine occurs at positions 118 and 135. At threonine 141 the chain carries Phosphothreonine. Residues 189–520 (HEVLCSMTNT…DADKRVTPIE (332 aa)) form an interaction with DAXX region. The 329-residue stretch at 199 to 527 (YEVLEFLGRG…PIETLNHPFV (329 aa)) folds into the Protein kinase domain. ATP contacts are provided by residues 205 to 213 (LGRGTFGQV) and lysine 228. Threonine 252 and threonine 273 each carry phosphothreonine. Aspartate 324 (proton acceptor) is an active-site residue. Tyrosine 361 bears the Phosphotyrosine; by autocatalysis mark. Serine 441 is modified (phosphoserine). 3 positions are modified to phosphothreonine: threonine 482, threonine 517, and threonine 566. The tract at residues 539–844 (AHVKSCFQNM…KENTPPRCAM (306 aa)) is interaction with SKI and SMAD1. The tract at residues 600–800 (SATLSLANPE…MRQQPTSTTS (201 aa)) is interaction with DAZAP2. Phosphoserine occurs at positions 634 and 668. The residue at position 687 (threonine 687) is a Phosphothreonine. Residues 752 to 897 (RNTHAHGSHY…ITISSDTDEE (146 aa)) are interaction with POU4F1. Residues 774 to 876 (HVTLPAAQPL…TRERQRQTIV (103 aa)) are interaction with CTBP1. Residues 787–897 (VAHVMRQQPT…ITISSDTDEE (111 aa)) form an interaction with HMGA1 region. Disordered stretches follow at residues 792–847 (RQQP…MVHS) and 891–963 (SSDT…CTGN). Positions 793–829 (QQPTSTTSSRKSKQHQSSVRNVSTCEVTSSQAISSPQ) are enriched in polar residues. The Nuclear localization signal 1 (NLS1) signature appears at 802–805 (RKSK). Phosphoserine is present on residues serine 815 and serine 827. A Nuclear localization signal 2 (NLS2) motif is present at residues 832 to 835 (KRVK). The interaction with TP53 and TP73 stretch occupies residues 839–934 (PPRCAMVHSS…PYSDSSSNTS (96 aa)). Residues 873–907 (QTIVIPDTPSPTVSVITISSDTDEEEEQKHAPTST) are interaction with UBE2I. The tract at residues 873–980 (QTIVIPDTPS…PLKTQASEVL (108 aa)) is localization to nuclear speckles. The segment at 873–980 (QTIVIPDTPS…PLKTQASEVL (108 aa)) is required for localization to nuclear speckles. Positions 884-908 (TVSVITISSDTDEEEEQKHAPTSTV) are SUMO interaction motifs (SIM); required for nuclear localization and kinase activity. The segment covering 923–937 (DSPYSDSSSNTSPYS) has biased composition (low complexity). A Phosphoserine modification is found at serine 934. Residues 935–1050 (PYSVQQRTGH…LSQAQQHMAA (116 aa)) are interaction with AXIN1. Polar residues predominate over residues 938–951 (VQQRTGHNGTNTLD). Residues lysine 953 and lysine 973 each participate in a glycyl lysine isopeptide (Lys-Gly) (interchain with G-Cter in SUMO2) cross-link. The tract at residues 984–1196 (DSLGPAISAS…PAKVNQYPYI (213 aa)) is autoinhibitory domain (AID). 5 positions are modified to phosphoserine: serine 991, serine 993, serine 1042, serine 1153, and serine 1186. Residues 991 to 1046 (SASHHSSSFKSKSSSTVTSTSGHSSGSSSGAIAYRQQRPGPHFQQQQPLNLSQAQQ) show a composition bias toward low complexity. The interval 991–1058 (SASHHSSSFK…AADRTGSHRR (68 aa)) is disordered. Residue lysine 1189 forms a Glycyl lysine isopeptide (Lys-Gly) (interchain with G-Cter in SUMO) linkage.

This sequence belongs to the protein kinase superfamily. CMGC Ser/Thr protein kinase family. HIPK subfamily. Interacts with CREB1, SIAH1, WSB1, CBX4, TRADD, p53/TP53, TP73, TP63, CREBBP, DAXX, P53DINP1, SKI, SMAD1, SMAD2 and SMAD3, but not SMAD4. Interacts with SP100; positively regulates TP53-dependent transcription. Interacts with ATF1, PML, RUNX1, EP300, NKX1-2, NKX2-5, UBE2I, HMGA1, CTBP1, AXIN1, NLK, MYB, POU4F1, POU4F2, POU4F3, UBE2I, UBL1 and ZBTB4. Probably part of a complex consisting of p53/TP53, HIPK2 and AXIN1. Interacts with DAZAP2; the interaction results in phosphorylation of DAZAP2 which causes localization of DAZAP2 to the nucleus, reduces interaction of DAZAP2 with HIPK2 and prevents DAZAP2-dependent degradation of HIPK2. Interacts with SIAH1; the interaction is promoted by DAZAP2 and results in SIAH1-mediated ubiquitination and subsequent proteasomal degradation of HIPK2. As to quaternary structure, interacts with SPN/CD43 cytoplasmic tail. Post-translationally, sumoylated. When conjugated it is directed to nuclear speckles. Desumoylated by SENP1. Sumoylation on Lys-32 is promoted by the E3 SUMO-protein ligase CBX4. Autophosphorylation at Tyr-361 in the activation loop activates the kinase and promotes nuclear localization. In terms of processing, ubiquitinated by FBXO3, WSB1 and SIAH1, leading to rapid proteasome-dependent degradation. The degradation mediated by FBXO3, but not ubiquitination, is prevented in the presence of PML. The degradation mediated by WSB1 and SIAH1 is reversibly reduced upon DNA damage. Post-translationally, cleaved at Asp-923 and Asp-984 by CASP6 in a p53/TP53-dependent manner. The cleaved form lacks the autoinhibitory C-terminal domain (AID), resulting in a hyperactive kinase, which potentiates p53/TP53 Ser-46 phosphorylation and subsequent activation of the cell death machinery. In terms of tissue distribution, ubiquitous. Abundant in muscle, heart, small intestine, stomach, kidney and brain; and low in testis, skin and lung.

The protein localises to the nucleus. It is found in the PML body. Its subcellular location is the cytoplasm. It catalyses the reaction L-seryl-[protein] + ATP = O-phospho-L-seryl-[protein] + ADP + H(+). The catalysed reaction is L-threonyl-[protein] + ATP = O-phospho-L-threonyl-[protein] + ADP + H(+). Functionally, serine/threonine-protein kinase involved in transcription regulation, p53/TP53-mediated cellular apoptosis and regulation of the cell cycle. Acts as a corepressor of several transcription factors, including SMAD1 and POU4F1/Brn3a and probably NK homeodomain transcription factors. Phosphorylates PDX1, ATF1, PML, p53/TP53, CREB1, CTBP1, CBX4, RUNX1, EP300, CTNNB1, HMGA1, ZBTB4 and DAZAP2. Inhibits cell growth and promotes apoptosis through the activation of p53/TP53 both at the transcription level and at the protein level (by phosphorylation and indirect acetylation). The phosphorylation of p53/TP53 may be mediated by a p53/TP53-HIPK2-AXIN1 complex. Involved in the response to hypoxia by acting as a transcriptional co-suppressor of HIF1A. Mediates transcriptional activation of TP73. In response to TGFB, cooperates with DAXX to activate JNK. Negative regulator through phosphorylation and subsequent proteasomal degradation of CTNNB1 and the antiapoptotic factor CTBP1. In the Wnt/beta-catenin signaling pathway acts as an intermediate kinase between MAP3K7/TAK1 and NLK to promote the proteasomal degradation of MYB. Phosphorylates CBX4 upon DNA damage and promotes its E3 SUMO-protein ligase activity. Activates CREB1 and ATF1 transcription factors by phosphorylation in response to genotoxic stress. In response to DNA damage, stabilizes PML by phosphorylation. PML, HIPK2 and FBXO3 may act synergically to activate p53/TP53-dependent transactivation. Promotes angiogenesis, and is involved in erythroid differentiation, especially during fetal liver erythropoiesis. Phosphorylation of RUNX1 and EP300 stimulates EP300 transcription regulation activity. Triggers ZBTB4 protein degradation in response to DNA damage. In response to DNA damage, phosphorylates DAZAP2 which localizes DAZAP2 to the nucleus, reduces interaction of DAZAP2 with HIPK2 and prevents DAZAP2-dependent ubiquitination of HIPK2 by E3 ubiquitin-protein ligase SIAH1 and subsequent proteasomal degradation. Modulates HMGA1 DNA-binding affinity. In response to high glucose, triggers phosphorylation-mediated subnuclear localization shifting of PDX1. Involved in the regulation of eye size, lens formation and retinal lamination during late embryogenesis. This chain is Homeodomain-interacting protein kinase 2 (Hipk2), found in Mus musculus (Mouse).